The sequence spans 299 residues: Fibrinogen silencer-binding protein (299 aa).

A Glycyl lysine isopeptide (Lys-Gly) (interchain with G-Cter in SUMO2) cross-link involves residue lysine 94.

Interacts with APBA1 (via PDZ 1 and 2 domains). In terms of tissue distribution, expressed in multiple tissues including brain.

The protein localises to the nucleus. Transcriptional repressor that down-regulates the expression of the fibrinogen gamma chain. Represses transcription of GSK3B gene promoter via its interaction with APBA1. The protein is Fibrinogen silencer-binding protein (FSBP) of Homo sapiens (Human).